We begin with the raw amino-acid sequence, 108 residues long: Insulin-1 (108 aa).

The first 24 residues, 1 to 24 (MALLVHFLPLLALLALWEPKPTQA), serve as a signal peptide directing secretion. 3 disulfides stabilise this stretch: Cys31/Cys94, Cys43/Cys107, and Cys93/Cys98. Residues 57–85 (EVEDPQVEQLELGGSPGDLQTLALEVARQ) constitute a propeptide, c peptide.

The protein belongs to the insulin family. As to quaternary structure, heterodimer of a B chain and an A chain linked by two disulfide bonds.

The protein localises to the secreted. Its function is as follows. Insulin decreases blood glucose concentration. It increases cell permeability to monosaccharides, amino acids and fatty acids. It accelerates glycolysis, the pentose phosphate cycle, and glycogen synthesis in liver. The chain is Insulin-1 (Ins1) from Mus musculus (Mouse).